The primary structure comprises 254 residues: Galactitol 2-dehydrogenase (L-tagatose-forming) (254 aa).

Residues 21–23 (SGI), Asp-42, 66–67 (DV), Tyr-159, Lys-163, and 192–194 (VAT) contribute to the NAD(+) site. The active-site Proton acceptor is the Tyr-159. Residue Trp-254 participates in Mg(2+) binding.

It belongs to the short-chain dehydrogenases/reductases (SDR) family. In terms of assembly, homotetramer. A divalent metal cation serves as cofactor.

The catalysed reaction is galactitol + NAD(+) = keto-L-tagatose + NADH + H(+). Its activity is regulated as follows. Inhibited by the chelating agents EDTA and alpha,alpha'-dipyridyl. Inhibited by Zn(2+) and Fe(2+). Catalyzes the interconversion of galactitol to the rare sugar L-tagatose. Shows activity with a wide range of substrates, and catalyzes the oxidation of a variety of polyvalent aliphatic alcohols and polyols to the corresponding ketones and ketoses, respectively, and in the reverse reaction, it reduces ketones with high stereoselectivity yielding the corresponding S-configurated alcohols. Shows high activity with D-threitol, xylitol, 1,2-hexanediol, 1,2-pentanediol, 2-hexanol, L-erythrulose, D-ribulose and acetoin. Specific for NAD(+). The sequence is that of Galactitol 2-dehydrogenase (L-tagatose-forming) from Cereibacter sphaeroides (Rhodobacter sphaeroides).